The primary structure comprises 514 residues: Peptide chain release factor 3 (514 aa).

The region spanning 8-268 (KKRRTFAIIS…TFLEFAPEPH (261 aa)) is the tr-type G domain. Residues 17 to 24 (SHPDAGKT), 85 to 89 (DTPGH), and 139 to 142 (NKLD) contribute to the GTP site.

This sequence belongs to the TRAFAC class translation factor GTPase superfamily. Classic translation factor GTPase family. PrfC subfamily.

It localises to the cytoplasm. In terms of biological role, increases the formation of ribosomal termination complexes and stimulates activities of RF-1 and RF-2. It binds guanine nucleotides and has strong preference for UGA stop codons. It may interact directly with the ribosome. The stimulation of RF-1 and RF-2 is significantly reduced by GTP and GDP, but not by GMP. The protein is Peptide chain release factor 3 of Streptococcus agalactiae serotype Ia (strain ATCC 27591 / A909 / CDC SS700).